The chain runs to 522 residues: Anti-sigma-I factor RsgI4 (522 aa).

At 1 to 51 (MNLGVVIKIKRKKAIIVTETGEFKAVNARNGMFLGQKILFDQQDVIENNRN) the chain is on the cytoplasmic side. The 48-residue stretch at 2-49 (NLGVVIKIKRKKAIIVTETGEFKAVNARNGMFLGQKILFDQQDVIENN) folds into the RsgI N-terminal anti-sigma domain. Residues 52 to 72 (GIGLAYSAAIAGMVAVFVFMF) traverse the membrane as a helical segment. Topologically, residues 73-522 (TYFGLHNFNG…SGILKWGREP (450 aa)) are extracellular. Residues 311–361 (SAKTPERATTVPVNTPVKPTDAPTKSPATATATATRAPVKATATPAKTLKP) show a composition bias toward low complexity. The tract at residues 311–371 (SAKTPERATT…SDTPVKTPDG (61 aa)) is disordered. Residues 371-522 (GEQSVKVRFY…SGILKWGREP (152 aa)) form the CBM3 domain.

As to quaternary structure, interacts (via RsgI N-terminal anti-sigma domain) with SigI4.

The protein resides in the cell membrane. Its function is as follows. Anti-sigma factor for SigI4. Negatively regulates SigI4 activity through direct interaction. Binding of the polysaccharide substrate to the extracellular C-terminal sensing domain of RsgI4 may induce a conformational change in its N-terminal cytoplasmic region, leading to the release and activation of SigI4. This is Anti-sigma-I factor RsgI4 from Acetivibrio thermocellus (strain ATCC 27405 / DSM 1237 / JCM 9322 / NBRC 103400 / NCIMB 10682 / NRRL B-4536 / VPI 7372) (Clostridium thermocellum).